A 122-amino-acid polypeptide reads, in one-letter code: Large ribosomal subunit protein uL14 (122 aa).

Belongs to the universal ribosomal protein uL14 family. As to quaternary structure, part of the 50S ribosomal subunit. Forms a cluster with proteins L3 and L19. In the 70S ribosome, L14 and L19 interact and together make contacts with the 16S rRNA in bridges B5 and B8.

Binds to 23S rRNA. Forms part of two intersubunit bridges in the 70S ribosome. The protein is Large ribosomal subunit protein uL14 of Amoebophilus asiaticus (strain 5a2).